Reading from the N-terminus, the 305-residue chain is Tetraspanin-12 (305 aa).

Residues 1 to 12 (MAREDSVKCLRC) lie on the Cytoplasmic side of the membrane. S-palmitoyl cysteine attachment occurs at residues C9 and C12. The chain crosses the membrane as a helical span at residues 13–33 (LLYALNLLFWLMSISVLAVSA). The Extracellular portion of the chain corresponds to 34–59 (WMRDYLNNVLTLTAETRVEEAVILTY). Residues 60–80 (FPVVHPVMIAVCCFLIIVGML) traverse the membrane as a helical segment. C83 is lipidated: S-palmitoyl cysteine. A helical transmembrane segment spans residues 90 to 110 (LLLLAWYFGTLLVIFCVELAC). Over 111-224 (GVWTYEQEVM…RGTKQLQVLR (114 aa)) the chain is Extracellular. Residues 225–245 (FLGISIGVTQILAMILTITLL) traverse the membrane as a helical segment. Over 246 to 305 (WALYYDRREPGTDQMLSLKNDASQHLSCHSVELLKPSLSRIFEHTSMANSFNTHFEMEEL) the chain is Cytoplasmic.

It belongs to the tetraspanin (TM4SF) family. As to quaternary structure, component of a complex, at least composed of TSPAN12, FZD4 and norrin (NDP). Interacts (when palmitoylated) with ADAM10. Interacts with MMP14/MT1-MMP. Post-translationally, palmitoylated; required for interaction with ADAM10. The precise position of palmitoylated residues is unclear and occurs either on Cys-9, Cys-12 and/or Cys-83.

Its subcellular location is the cell membrane. In terms of biological role, regulator of cell surface receptor signal transduction. Plays a central role in retinal vascularization by regulating norrin (NDP) signal transduction. Acts in concert with norrin (NDP) to promote FZD4 multimerization and subsequent activation of FZD4, leading to promote accumulation of beta-catenin (CTNNB1) and stimulate LEF/TCF-mediated transcriptional programs. Suprisingly, it only activates the norrin (NDP)-dependent activation of FZD4, while it does not activate the Wnt-dependent activation of FZD4, suggesting the existence of a Wnt-independent signaling that also promote accumulation the beta-catenin (CTNNB1). Acts as a regulator of membrane proteinases such as ADAM10 and MMP14/MT1-MMP. Activates ADAM10-dependent cleavage activity of amyloid precursor protein (APP). Activates MMP14/MT1-MMP-dependent cleavage activity. This chain is Tetraspanin-12 (Tspan12), found in Rattus norvegicus (Rat).